A 232-amino-acid polypeptide reads, in one-letter code: tRNA (guanine-N(1)-)-methyltransferase (232 aa).

S-adenosyl-L-methionine-binding positions include Gly111 and 131-136 (IGDYIL).

It belongs to the RNA methyltransferase TrmD family. As to quaternary structure, homodimer.

It localises to the cytoplasm. It catalyses the reaction guanosine(37) in tRNA + S-adenosyl-L-methionine = N(1)-methylguanosine(37) in tRNA + S-adenosyl-L-homocysteine + H(+). In terms of biological role, specifically methylates guanosine-37 in various tRNAs. This Bartonella quintana (strain Toulouse) (Rochalimaea quintana) protein is tRNA (guanine-N(1)-)-methyltransferase.